A 206-amino-acid chain; its full sequence is Cytidylate kinase (206 aa).

7–15 contributes to the ATP binding site; the sequence is GVAASGKSS.

The protein belongs to the cytidylate kinase family. Type 1 subfamily.

Its subcellular location is the cytoplasm. It catalyses the reaction CMP + ATP = CDP + ADP. The enzyme catalyses dCMP + ATP = dCDP + ADP. The sequence is that of Cytidylate kinase from Deinococcus radiodurans (strain ATCC 13939 / DSM 20539 / JCM 16871 / CCUG 27074 / LMG 4051 / NBRC 15346 / NCIMB 9279 / VKM B-1422 / R1).